The chain runs to 1465 residues: DNA polymerase III PolC-type (1465 aa).

The Exonuclease domain maps to 427-583 (YVVFDVETTG…YDAEATGRLL (157 aa)).

Belongs to the DNA polymerase type-C family. PolC subfamily.

The protein resides in the cytoplasm. It carries out the reaction DNA(n) + a 2'-deoxyribonucleoside 5'-triphosphate = DNA(n+1) + diphosphate. Its function is as follows. Required for replicative DNA synthesis. This DNA polymerase also exhibits 3' to 5' exonuclease activity. The polypeptide is DNA polymerase III PolC-type (Streptococcus pyogenes serotype M4 (strain MGAS10750)).